Consider the following 414-residue polypeptide: Gamma-glutamyl phosphate reductase (414 aa).

Belongs to the gamma-glutamyl phosphate reductase family.

The protein resides in the cytoplasm. The enzyme catalyses L-glutamate 5-semialdehyde + phosphate + NADP(+) = L-glutamyl 5-phosphate + NADPH + H(+). The protein operates within amino-acid biosynthesis; L-proline biosynthesis; L-glutamate 5-semialdehyde from L-glutamate: step 2/2. Functionally, catalyzes the NADPH-dependent reduction of L-glutamate 5-phosphate into L-glutamate 5-semialdehyde and phosphate. The product spontaneously undergoes cyclization to form 1-pyrroline-5-carboxylate. The protein is Gamma-glutamyl phosphate reductase of Clostridium botulinum (strain Eklund 17B / Type B).